We begin with the raw amino-acid sequence, 846 residues long: Auxin response factor 2A (846 aa).

Residues M1 to S12 are compositionally biased toward polar residues. Residues M1 to G30 are disordered. The segment at residues F146–M248 is a DNA-binding region (TF-B3). 2 disordered regions span residues P380–A423 and D660–A693. 2 stretches are compositionally biased toward polar residues: residues I398–L408 and S414–A423. Residues S675–A693 show a composition bias toward basic and acidic residues. One can recognise a PB1 domain in the interval R720 to E804. Composition is skewed to polar residues over residues N809–A824 and Q836–S846. The disordered stretch occupies residues N809–S846.

It belongs to the ARF family. As to quaternary structure, homodimers and heterodimers. Interacts with ASR1. In terms of tissue distribution, expressed in root, leaf and flower. Expressed in flower buds about three days before opening including ovary, petal and sepal with the highest in stamen. Expressed in stem. Expressed in fruit. Expressed in seeds.

Its subcellular location is the nucleus. Its function is as follows. Auxin response factors (ARFs) are transcriptional factors that bind specifically to the DNA sequence 5'-TGTCTC-3' found in the auxin-responsive promoter elements (AuxREs). Could act as transcriptional activator or repressor. Involved in the control of fruit ripening process. Regulates expression of a number of ripening regulators, transcription factors, and ethylene biosynthesis and signaling components. May act as a transcriptional repressor of auxin-responsive genes. Regulates vegetative growth, lateral root formation and flower organ senescence, possibly partially by regulating gene expression of auxin and ethylene response factor (ERF) genes. Plays a negative role in axillary shoot meristem formation. The chain is Auxin response factor 2A from Solanum lycopersicum (Tomato).